Consider the following 75-residue polypeptide: Large ribosomal subunit protein bL31 (75 aa).

The Zn(2+) site is built by Cys-16, Cys-18, Cys-36, and Cys-39.

It belongs to the bacterial ribosomal protein bL31 family. Type A subfamily. Part of the 50S ribosomal subunit. The cofactor is Zn(2+).

Its function is as follows. Binds the 23S rRNA. The sequence is that of Large ribosomal subunit protein bL31 from Desulforapulum autotrophicum (strain ATCC 43914 / DSM 3382 / VKM B-1955 / HRM2) (Desulfobacterium autotrophicum).